The primary structure comprises 607 residues: UvrABC system protein C (607 aa).

The region spanning 16-94 is the GIY-YIG domain; it reads ARPGVYRMFD…IKQWRPPYNI (79 aa). The region spanning 203-238 is the UVR domain; it reads QQLGNELNAEMEKAAMALNFEKAAELRDQIALLRRV.

Belongs to the UvrC family. Interacts with UvrB in an incision complex.

It is found in the cytoplasm. In terms of biological role, the UvrABC repair system catalyzes the recognition and processing of DNA lesions. UvrC both incises the 5' and 3' sides of the lesion. The N-terminal half is responsible for the 3' incision and the C-terminal half is responsible for the 5' incision. The protein is UvrABC system protein C of Pseudomonas putida (strain W619).